Here is a 390-residue protein sequence, read N- to C-terminus: Galactokinase (390 aa).

Substrate is bound at residue 33–36 (EHTD). ATP is bound by residues S67 and 124 to 130 (GAGLSSS). The Mg(2+) site is built by S130 and E162. Catalysis depends on D174, which acts as the Proton acceptor. Position 224 (Y224) interacts with substrate.

Belongs to the GHMP kinase family. GalK subfamily.

It is found in the cytoplasm. It carries out the reaction alpha-D-galactose + ATP = alpha-D-galactose 1-phosphate + ADP + H(+). It participates in carbohydrate metabolism; galactose metabolism. Functionally, catalyzes the transfer of the gamma-phosphate of ATP to D-galactose to form alpha-D-galactose-1-phosphate (Gal-1-P). The chain is Galactokinase from Bacillus subtilis (strain 168).